The primary structure comprises 1148 residues: MSQQSIQKVLVANRGEIAIRIFRACTELNIRTVAVYSKEDSGSYHRYKADEAYLVGEGKKPIDAYLDIEGIIDIAKRNKVDAIHPGYGFLSENIHFARRCEEEGIVFIGPKSEHLDMFGDKVKAREQAEKAGIPVIPGSDGPAETLEAVEQFGQANGYPIIIKASLGGGGRGMRIVRSESEVKEAYERAKSEAKAAFGNDEVYVEKLIENPKHIEVQVIGDKQGNVVHLFERDCSVQRRHQKVIEVAPSVSLSPELRDQICEAAVALAKNVNYINAGTVEFLVANNEFYFIEVNPRVQVEHTITEMITGVDIVQTQILVAQGHSLHSKKVNIPEQKDIFTIGYAIQSRVTTEDPQNDFMPDTGKIMAYRSGGGFGVRLDTGNSFQGAVITPYYDSLLVKLSTWALTFEQAAAKMVRNLQEFRIRGIKTNIPFLENVAKHEKFLTGQYDTSFIDTTPELFNFPKQKDRGTKMLTYIGNVTVNGFPGIGKKEKPAFDKPLGVKVDVDQQPARGTKQILDEKGAEGLANWVKEQKSVLLTDTTFRDAHQSLLATRIRSHDLKKIANPTAALWPELFSMEMWGGATFDVAYRFLKEDPWKRLEDLRKEVPNTLFQMLLRSSNAVGYTNYPDNVIKEFVKQSAQSGIDVFRIFDSLNWVKGMTLAIDAVRDTGKVAEAAICYTGDILDKNRTKYDLAYYTSMAKELEAAGAHILGIKDMAGLLKPQAAYELVSALKETIDIPVHLHTHDTSGNGIYMYAKAVEAGVDIIDVAVSSMAGLTSQPSASGFYHAMEGNDRRPEMNVQGVELLSQYWESVRKYYSEFESGMKSPHTEIYEHEMPGGQYSNLQQQAKGVGLGDRWNEVKEMYRRVNDMFGDIVKVTPSSKVVGDMALYMVQNNLTEKDVYEKGESLDFPDSVVELFKGNIGQPHGGFPEKLQKLILKGQEPITVRPGELLEPVSFEAIKQEFKEQHNLEISDQDAVAYALYPKVFTDYVKTTESYGDISVLDTPTFFYGMTLGEEIEVEIERGKTLIVKLISIGEPQPDATRVVYFELNGQPREVVIKDESIKSSVQERLKADRTNPSHIAASMPGTVIKVLAEAGTKVNKGDHLMINEAMKMETTVQAPFSGTIKQVHVKNGEPIQTGDLLLEIEKA.

One can recognise a Biotin carboxylation domain in the interval 1–457 (MSQQSIQKVL…DTSFIDTTPE (457 aa)). Residues K121, E205, and H240 each contribute to the ATP site. The ATP-grasp domain maps to 125 to 321 (REQAEKAGIP…IVQTQILVAQ (197 aa)). K242 is an active-site residue. A Pyruvate carboxyltransferase domain is found at 534–802 (VLLTDTTFRD…RPEMNVQGVE (269 aa)). Substrate is bound by residues 542-546 (RDAHQ) and R615. A divalent metal cation is bound at residue D543. Residues K712, H741, and H743 each contribute to the a divalent metal cation site. An N6-carboxylysine modification is found at K712. T876 contributes to the substrate binding site. Positions 1071-1146 (KADRTNPSHI…QTGDLLLEIE (76 aa)) constitute a Biotinyl-binding domain. N6-biotinyllysine is present on K1112.

As to quaternary structure, homotetramer. At very low potassium concentrations, when intracellular levels of c-di-AMP are low, interacts with apo-DarB. c-di-AMP inhibits the binding of DarB to PYC. Does not bind directly c-di-AMP. The cofactor is biotin.

The enzyme catalyses hydrogencarbonate + pyruvate + ATP = oxaloacetate + ADP + phosphate + H(+). Its activity is regulated as follows. Activated by the cyclic di-AMP (c-di-AMP) receptor DarB in the absence of c-di-AMP. Allosterically activated by acetyl-CoA. Inhibited by the biotin-complexing protein avidin. Catalyzes a 2-step reaction, involving the ATP-dependent carboxylation of the covalently attached biotin in the first step and the transfer of the carboxyl group to pyruvate in the second, leading to oxaloacetate production. Fulfills an anaplerotic function in B.subtilis as it is necessary for growth on glucose, but is not required for sporulation. The protein is Pyruvate carboxylase (pyc) of Bacillus subtilis (strain 168).